The following is a 200-amino-acid chain: Recombination protein RecR (200 aa).

The C4-type zinc finger occupies 57-72 (CRQCRTLTEQELCPQC). The 96-residue stretch at 80 to 175 (TQLCVVEGPT…AATRIAHGVP (96 aa)) folds into the Toprim domain.

Belongs to the RecR family.

In terms of biological role, may play a role in DNA repair. It seems to be involved in an RecBC-independent recombinational process of DNA repair. It may act with RecF and RecO. The protein is Recombination protein RecR of Pseudomonas putida (strain GB-1).